We begin with the raw amino-acid sequence, 238 residues long: uncharacterized protein (238 aa).

Disordered stretches follow at residues 123 to 167 (FRQG…VHGG) and 180 to 238 (SAMG…AKRR). Residues 152–161 (SGHSPSPGRH) show a composition bias toward low complexity. The segment covering 207–238 (HRGHGHRFRLLAPRSRPRQRRGGGSRAAAKRR) has biased composition (basic residues).

The protein belongs to the PNP/MTAP phosphorylase family.

This is an uncharacterized protein from Rhodospirillum rubrum.